The sequence spans 50 residues: Photosystem II reaction center protein M (50 aa).

Residues 7 to 27 (GFIASLLFVGVPTIFLIGLFI) traverse the membrane as a helical segment.

It belongs to the PsbM family. PSII is composed of 1 copy each of membrane proteins PsbA, PsbB, PsbC, PsbD, PsbE, PsbF, PsbH, PsbI, PsbJ, PsbK, PsbL, PsbM, PsbT, PsbX, PsbY, Psb30/Ycf12, peripheral proteins PsbO, CyanoQ (PsbQ), PsbU, PsbV and a large number of cofactors. It forms dimeric complexes.

The protein localises to the cellular thylakoid membrane. In terms of biological role, one of the components of the core complex of photosystem II (PSII). PSII is a light-driven water:plastoquinone oxidoreductase that uses light energy to abstract electrons from H(2)O, generating O(2) and a proton gradient subsequently used for ATP formation. It consists of a core antenna complex that captures photons, and an electron transfer chain that converts photonic excitation into a charge separation. This subunit is found at the monomer-monomer interface. This Prochlorococcus marinus (strain MIT 9312) protein is Photosystem II reaction center protein M.